The chain runs to 253 residues: 5-oxoprolinase subunit A (253 aa).

This sequence belongs to the LamB/PxpA family. In terms of assembly, forms a complex composed of PxpA, PxpB and PxpC.

The enzyme catalyses 5-oxo-L-proline + ATP + 2 H2O = L-glutamate + ADP + phosphate + H(+). In terms of biological role, catalyzes the cleavage of 5-oxoproline to form L-glutamate coupled to the hydrolysis of ATP to ADP and inorganic phosphate. This Syntrophobacter fumaroxidans (strain DSM 10017 / MPOB) protein is 5-oxoprolinase subunit A.